The sequence spans 301 residues: GTPase Era (301 aa).

The Era-type G domain occupies 6–173; that stretch reads KSGFVAIVGR…LEQTNANLEI (168 aa). Residues 14 to 21 are G1; that stretch reads GRPNVGKS. 14-21 contacts GTP; that stretch reads GRPNVGKS. The segment at 40–44 is G2; that stretch reads QTTRN. The G3 stretch occupies residues 61 to 64; that stretch reads DTPG. GTP contacts are provided by residues 61–65 and 123–126; these read DTPGI and NKID. Positions 123–126 are G4; the sequence is NKID. Positions 152–154 are G5; sequence ISA. Residues 204-282 enclose the KH type-2 domain; the sequence is TREEVPHSVA…FLEIWVKVQK (79 aa).

This sequence belongs to the TRAFAC class TrmE-Era-EngA-EngB-Septin-like GTPase superfamily. Era GTPase family. As to quaternary structure, monomer.

It localises to the cytoplasm. The protein resides in the cell membrane. In terms of biological role, an essential GTPase that binds both GDP and GTP, with rapid nucleotide exchange. Plays a role in 16S rRNA processing and 30S ribosomal subunit biogenesis and possibly also in cell cycle regulation and energy metabolism. This is GTPase Era from Listeria innocua serovar 6a (strain ATCC BAA-680 / CLIP 11262).